The sequence spans 943 residues: MTQDYKATLHLPATEFPMRGDLPKREPAMLERWEREGFYAQLRANAAGRPLFVLHDGPPYANGQIHLGHAVNKILKDIIVKSKYLAGFDAPYIPGWDCHGLPIEIAIEKKYGKVGVKLDAAEFRQKCREYATEQIDLQRRDFKRLGVIGDWDNPYKTLDFRFEANEIRALAKVVDNGHLTRGVKPVHWCFDCGSALAEAEIEYADKVSPTVDIAYPARDPAAVAAAFGASLPAGVGVAVPIWTTTPWTLPASLAVSLGAELDYVLVEGPADRGQPRWLVIAEALAAKALARYGVGEVVVHGHAKGAALEHMLLNHPFYAEREIPLLLGDHVSAEDGTGAVHTAPGHGQEDYQVSKQYGLLERYGAAQINPVDGRGVYLPSTPPLRDTVLAGLHIWKANDVIIEALRETGVLLAASKMEHSYPHCWRHKTPIAFRATPQWFISMEQANLRADALKAIENVHWYPSWGQARIAGMVDGRPDWTISRQRTWGVPIALFVHRETGEPHPRSTELLRQVADRVEQGGVDVWYTLDASELLSSEAADYEKITDILDVWFDSGVTHEAVLPDRGLPKPADLYLEGSDQHRGWFQSSLLSGVAMDKAAPYKQCLTHGFTVDEHGRKMSKSLGNGIEPQDIMKTLGADILRLWIASADYSNEMSLSQEILKRNADAYRRLRNTARFLLGNLHGFDPLQHLVALDEMVLLDRWIVHRAHELQEKIVAAYARYDFAEIVQALLNFCSVDLGSLYLDVTKDRLYTMAEDARGRRSAQSAMYHVAEAFVRWIAPVLSFTAEELWGYLPGKHVDNVLFATWYDGLAPLPADAALSGADFDKLLVLREQVAKVLEPMRANGAIGAALEAEITVAADAQTAARWQPLAEELRFLFISGDVTVTAASTDDIFVSAQPTTKAKCVRCWHHQASVGSDPRHPELCSRCVSNIEGPGERRRWF.

Residues 59 to 69 (PYANGQIHLGH) carry the 'HIGH' region motif. L-isoleucyl-5'-AMP is bound at residue E577. Positions 618 to 622 (KMSKS) match the 'KMSKS' region motif. K621 lines the ATP pocket. Zn(2+)-binding residues include C906, C909, C926, and C929.

The protein belongs to the class-I aminoacyl-tRNA synthetase family. IleS type 1 subfamily. In terms of assembly, monomer. Zn(2+) is required as a cofactor.

Its subcellular location is the cytoplasm. It catalyses the reaction tRNA(Ile) + L-isoleucine + ATP = L-isoleucyl-tRNA(Ile) + AMP + diphosphate. In terms of biological role, catalyzes the attachment of isoleucine to tRNA(Ile). As IleRS can inadvertently accommodate and process structurally similar amino acids such as valine, to avoid such errors it has two additional distinct tRNA(Ile)-dependent editing activities. One activity is designated as 'pretransfer' editing and involves the hydrolysis of activated Val-AMP. The other activity is designated 'posttransfer' editing and involves deacylation of mischarged Val-tRNA(Ile). This Xanthomonas axonopodis pv. citri (strain 306) protein is Isoleucine--tRNA ligase.